An 870-amino-acid chain; its full sequence is Histidine biosynthesis trifunctional protein (870 aa).

The segment at 1 to 285 (METTLPLPFL…KFVVKQKGRF (285 aa)) is phosphoribosyl-AMP cyclohydrolase. A phosphoribosyl-ATP pyrophosphohydrolase region spans residues 286–367 (CHLDQSGCFG…FYFALTRAVA (82 aa)). The interval 368 to 870 (AGVTLADIER…IRLEHMSKSN (503 aa)) is histidinol dehydrogenase. Zn(2+) contacts are provided by Gln693 and His696. Residues Glu762 and His763 contribute to the active site. Residues Asp796 and His855 each contribute to the Zn(2+) site.

It in the C-terminal section; belongs to the histidinol dehydrogenase family. Zn(2+) is required as a cofactor.

The enzyme catalyses 1-(5-phospho-beta-D-ribosyl)-5'-AMP + H2O = 1-(5-phospho-beta-D-ribosyl)-5-[(5-phospho-beta-D-ribosylamino)methylideneamino]imidazole-4-carboxamide. It catalyses the reaction 1-(5-phospho-beta-D-ribosyl)-ATP + H2O = 1-(5-phospho-beta-D-ribosyl)-5'-AMP + diphosphate + H(+). It carries out the reaction L-histidinol + 2 NAD(+) + H2O = L-histidine + 2 NADH + 3 H(+). It participates in amino-acid biosynthesis; L-histidine biosynthesis; L-histidine from 5-phospho-alpha-D-ribose 1-diphosphate: step 2/9. Its pathway is amino-acid biosynthesis; L-histidine biosynthesis; L-histidine from 5-phospho-alpha-D-ribose 1-diphosphate: step 3/9. The protein operates within amino-acid biosynthesis; L-histidine biosynthesis; L-histidine from 5-phospho-alpha-D-ribose 1-diphosphate: step 9/9. The chain is Histidine biosynthesis trifunctional protein (his-3) from Neurospora crassa (strain ATCC 24698 / 74-OR23-1A / CBS 708.71 / DSM 1257 / FGSC 987).